The primary structure comprises 440 residues: Cytochrome c biogenesis protein Ccs1 (440 aa).

The next 3 helical transmembrane spans lie at 19 to 39 (LRLA…GTFI), 78 to 98 (NIWF…CTYT), and 164 to 184 (VGPI…ACGA).

This sequence belongs to the Ccs1/CcsB family. In terms of assembly, may interact with CcsA.

It is found in the plastid. It localises to the chloroplast thylakoid membrane. In terms of biological role, required during biogenesis of c-type cytochromes (cytochrome c6 and cytochrome f) at the step of heme attachment. This chain is Cytochrome c biogenesis protein Ccs1, found in Emiliania huxleyi (Coccolithophore).